The following is a 160-amino-acid chain: Cytochrome b6-f complex subunit 4 (160 aa).

3 helical membrane passes run 36–56, 95–115, and 131–151; these read LLYI…GLAI, LLGV…PFLE, and TVFL…TLPI.

Belongs to the cytochrome b family. PetD subfamily. The 4 large subunits of the cytochrome b6-f complex are cytochrome b6, subunit IV (17 kDa polypeptide, petD), cytochrome f and the Rieske protein, while the 4 small subunits are petG, petL, petM and petN. The complex functions as a dimer.

The protein resides in the plastid. It is found in the chloroplast thylakoid membrane. In terms of biological role, component of the cytochrome b6-f complex, which mediates electron transfer between photosystem II (PSII) and photosystem I (PSI), cyclic electron flow around PSI, and state transitions. This chain is Cytochrome b6-f complex subunit 4, found in Acorus calamus (Sweet flag).